The chain runs to 1894 residues: Fibronectin type III domain-containing protein 1 (1894 aa).

Positions 1-32 are cleaved as a signal peptide; that stretch reads MAPEAGATLRAPRRLSWAALLLLAALLPVASS. The region spanning 39 to 131 is the Fibronectin type-III 1 domain; that stretch reads HPLKPRHVKL…PVYRAESPPG (93 aa). Asn149 carries N-linked (GlcNAc...) asparagine glycosylation. Fibronectin type-III domains lie at 158 to 258, 262 to 357, and 362 to 457; these read PNKP…SEED, VPDD…TPES, and APEN…MPTT. Disordered stretches follow at residues 455-500, 515-1271, 1311-1350, and 1444-1515; these read PTTS…PQGR, ANGG…TVSP, LSRQ…IING, and THPP…CPPG. Residues 565–574 show a composition bias toward basic residues; the sequence is TLRPPSRHGH. Residues 614–625 are compositionally biased toward low complexity; the sequence is PSASASPAHHAS. The segment covering 626–641 has biased composition (polar residues); sequence TQGTSHRPSLPASLND. 2 stretches are compositionally biased toward low complexity: residues 711–722 and 759–778; these read SASAPPSRLSPP and SRST…TQVS. At Ser717 the chain carries Phosphoserine. Basic and acidic residues predominate over residues 786–799; sequence GESHGDGDREDGGR. Composition is skewed to polar residues over residues 941–957 and 1027–1060; these read KYSS…QSTD and SPSQ…TASS. A compositionally biased stretch (acidic residues) spans 1071-1088; it reads QDEDAQGSYDDDSTEVEA. Over residues 1166–1176 the composition is skewed to polar residues; the sequence is PLSSKSQQSVS. The span at 1197-1209 shows a compositional bias: low complexity; the sequence is SSSVPKWPSSSTP. Positions 1211–1226 are enriched in basic and acidic residues; that stretch reads GGKDADGSLAKEEREP. Residues 1445 to 1504 are compositionally biased toward low complexity; the sequence is HPPTTTMQPTTTTTPLPTTTTPRPTTATTRRTTTTRRTTTRRPTTTVRTTTRTTTTTTPT. In terms of domain architecture, Fibronectin type-III 5 spans 1658-1752; sequence APRNITVVAV…PSVSFVTESD (95 aa). An N-linked (GlcNAc...) asparagine glycan is attached at Asn1661.

In terms of tissue distribution, almost absent from healthy skin; especially in epidermal keratinocytes, skin fibroblasts or endothelial cells and is barely detectable in benign melanocytic naevi. Expressed in the stroma close to skin tumors, in the tumor cells themselves and in the epidermis of psoriasis.

It localises to the secreted. In terms of biological role, may be an activator of G protein signaling. The chain is Fibronectin type III domain-containing protein 1 (FNDC1) from Homo sapiens (Human).